Here is a 398-residue protein sequence, read N- to C-terminus: Cysteine protease ATG4A (398 aa).

Cys-77 functions as the Nucleophile in the catalytic mechanism. Active-site residues include Asp-279 and His-281. An LIR motif is present at residues 393–396; it reads FEIL.

Belongs to the peptidase C54 family. Interacts with ATG9A; the interaction is direct.

The protein localises to the cytoplasm. It carries out the reaction [protein]-C-terminal L-amino acid-glycyl-phosphatidylethanolamide + H2O = [protein]-C-terminal L-amino acid-glycine + a 1,2-diacyl-sn-glycero-3-phosphoethanolamine. Inhibited by N-ethylmaleimide. Redox-regulated during autophagy since reducing conditions activate ATG4A whereas an oxidizing environment such as the presence of H(2)O(2) inhibits its activity. Cysteine protease that plays a key role in autophagy by mediating both proteolytic activation and delipidation of ATG8 family proteins. The protease activity is required for proteolytic activation of ATG8 family proteins: cleaves the C-terminal amino acid of ATG8 proteins to reveal a C-terminal glycine. Exposure of the glycine at the C-terminus is essential for ATG8 proteins conjugation to phosphatidylethanolamine (PE) and insertion to membranes, which is necessary for autophagy. Preferred substrate is GABARAPL2 followed by MAP1LC3A and GABARAP. Protease activity is also required to counteract formation of high-molecular weight conjugates of ATG8 proteins (ATG8ylation): acts as a deubiquitinating-like enzyme that removes ATG8 conjugated to other proteins, such as ATG3. In addition to the protease activity, also mediates delipidation of ATG8 family proteins. Catalyzes delipidation of PE-conjugated forms of ATG8 proteins during macroautophagy. Compared to ATG4B, the major protein for proteolytic activation of ATG8 proteins, shows weaker ability to cleave the C-terminal amino acid of ATG8 proteins, while it displays stronger delipidation activity. Involved in phagophore growth during mitophagy independently of its protease activity and of ATG8 proteins: acts by regulating ATG9A trafficking to mitochondria and promoting phagophore-endoplasmic reticulum contacts during the lipid transfer phase of mitophagy. Its function is as follows. (Microbial infection) Mediates cleavage of an ATG8 protein homolog coded in the genome of cytopathogenic bovine viral diarrhea virus (BVDV). In Bos taurus (Bovine), this protein is Cysteine protease ATG4A.